We begin with the raw amino-acid sequence, 140 residues long: Putative pre-16S rRNA nuclease (140 aa).

This sequence belongs to the YqgF nuclease family.

The protein localises to the cytoplasm. Could be a nuclease involved in processing of the 5'-end of pre-16S rRNA. The sequence is that of Putative pre-16S rRNA nuclease from Vibrio vulnificus (strain CMCP6).